Reading from the N-terminus, the 489-residue chain is Blue-light-activated histidine kinase (489 aa).

Residues Ala-19 to Lys-93 form the PAS domain. Cys-69 bears the S-4a-FMN cysteine mark. PAC domains are found at residues Lys-93–Lys-147 and Tyr-232–Leu-281. The segment at Asn-259–Thr-341 is HWE histidine kinase domain. His-288 carries the post-translational modification Phosphohistidine; by autocatalysis.

FMN binds covalently to cysteine after exposure to blue light and this bond is spontaneously broken in the dark.

The catalysed reaction is ATP + protein L-histidine = ADP + protein N-phospho-L-histidine.. Photosensitive kinase that is involved in increased bacterial virulence upon exposure to light. Once ejected from an infected animal host, sunlight acts as an environmental signal that increases the virulence of the bacterium, preparing it for infection of the next host. This photoreceptor protein is directly related to the bacterium's survival and replication within host macrophages, as it is required for optimal replication of bacteria inside macrophages. This Brucella abortus (strain 2308) protein is Blue-light-activated histidine kinase.